A 1097-amino-acid chain; its full sequence is DNA-directed RNA polymerase subunit beta (1097 aa).

Residues 1071–1097 (MQDVNPKRNTPSRPTYESLGTSEYAED) form a disordered region. Residues 1077 to 1091 (KRNTPSRPTYESLGT) are compositionally biased toward polar residues.

Belongs to the RNA polymerase beta chain family. In terms of assembly, in cyanobacteria the RNAP catalytic core is composed of 2 alpha, 1 beta, 1 beta', 1 gamma and 1 omega subunit. When a sigma factor is associated with the core the holoenzyme is formed, which can initiate transcription.

It carries out the reaction RNA(n) + a ribonucleoside 5'-triphosphate = RNA(n+1) + diphosphate. Functionally, DNA-dependent RNA polymerase catalyzes the transcription of DNA into RNA using the four ribonucleoside triphosphates as substrates. In Prochlorococcus marinus subsp. pastoris (strain CCMP1986 / NIES-2087 / MED4), this protein is DNA-directed RNA polymerase subunit beta.